The primary structure comprises 202 residues: Dephospho-CoA kinase (202 aa).

A DPCK domain is found at 6-202; that stretch reads KVSITGDLSS…EYFYALKGAL (197 aa). Position 14 to 19 (14 to 19) interacts with ATP; sequence SSGKTE.

This sequence belongs to the CoaE family.

The protein localises to the cytoplasm. It catalyses the reaction 3'-dephospho-CoA + ATP = ADP + CoA + H(+). The protein operates within cofactor biosynthesis; coenzyme A biosynthesis; CoA from (R)-pantothenate: step 5/5. Catalyzes the phosphorylation of the 3'-hydroxyl group of dephosphocoenzyme A to form coenzyme A. The polypeptide is Dephospho-CoA kinase (Chlamydia felis (strain Fe/C-56) (Chlamydophila felis)).